Reading from the N-terminus, the 94-residue chain is Co-chaperonin GroES (94 aa).

It belongs to the GroES chaperonin family. Heptamer of 7 subunits arranged in a ring. Interacts with the chaperonin GroEL.

The protein localises to the cytoplasm. In terms of biological role, together with the chaperonin GroEL, plays an essential role in assisting protein folding. The GroEL-GroES system forms a nano-cage that allows encapsulation of the non-native substrate proteins and provides a physical environment optimized to promote and accelerate protein folding. GroES binds to the apical surface of the GroEL ring, thereby capping the opening of the GroEL channel. This Finegoldia magna (strain ATCC 29328 / DSM 20472 / WAL 2508) (Peptostreptococcus magnus) protein is Co-chaperonin GroES.